A 565-amino-acid polypeptide reads, in one-letter code: Probable serine/threonine-protein kinase abkA (565 aa).

Positions 44 to 77 (NNNNISLKDKFKDLKDLKDNLNEKKINNDNDDDD) form a coiled coil. Positions 231–565 (LFQDDPIAAA…FKNIFYKNYK (335 aa)) constitute a Protein kinase domain. ATP contacts are provided by residues 237–245 (IAAASIGQV) and Lys-259. Asp-401 functions as the Proton acceptor in the catalytic mechanism.

The protein belongs to the protein kinase superfamily. ADCK protein kinase family.

This is Probable serine/threonine-protein kinase abkA (abkA) from Dictyostelium discoideum (Social amoeba).